The sequence spans 273 residues: Protein FAM210A (273 aa).

The tract at residues 94–116 (RVLSSSSTSQETPSEKKEETDPL) is disordered. Over residues 106-116 (PSEKKEETDPL) the composition is skewed to basic and acidic residues. The 113-residue stretch at 118–230 (DKSISLYQRF…GYMSTPPPVK (113 aa)) folds into the DUF1279 domain. The chain crosses the membrane as a helical span at residues 138–158 (LIPVHLITSGIWFGTFYYATI). Residues 233–269 (LQGRMEETKELITEKMEETKDRLTEKLQETKGKVSFK) are a coiled coil.

It belongs to the FAM210 family. In terms of assembly, interacts with ATAD3A. In terms of tissue distribution, expressed in skeletal muscle, heart, brain but not in bone.

The protein resides in the membrane. It localises to the mitochondrion. The protein localises to the cytoplasm. In terms of biological role, may play a role in the structure and strength of both muscle and bone. The chain is Protein FAM210A (Fam210a) from Mus musculus (Mouse).